A 339-amino-acid polypeptide reads, in one-letter code: tRNA-specific 2-thiouridylase MnmA (339 aa).

ATP contacts are provided by residues 8-15 and Met-34; that span reads AMSGGVDS. The active-site Nucleophile is the Cys-94. A disulfide bridge links Cys-94 with Cys-188. Gly-118 provides a ligand contact to ATP. The segment at 136-138 is interaction with tRNA; it reads KDQ. Cys-188 (cysteine persulfide intermediate) is an active-site residue. The segment at 290-291 is interaction with tRNA; sequence RY.

It belongs to the MnmA/TRMU family.

The protein localises to the cytoplasm. The catalysed reaction is S-sulfanyl-L-cysteinyl-[protein] + uridine(34) in tRNA + AH2 + ATP = 2-thiouridine(34) in tRNA + L-cysteinyl-[protein] + A + AMP + diphosphate + H(+). Its function is as follows. Catalyzes the 2-thiolation of uridine at the wobble position (U34) of tRNA, leading to the formation of s(2)U34. In Nitratiruptor sp. (strain SB155-2), this protein is tRNA-specific 2-thiouridylase MnmA.